The following is a 38-amino-acid chain: Antimicrobial peptide 1 (38 aa).

Disulfide bonds. Expressed in flowers but not in leaves, seeds or roots (at protein level).

Functionally, antimicrobial peptide. Active against fungal species B.cinerea (IC(50)=5.8 uM) and A.niger (IC(50)=5.6 uM) but not against F.oxysporum, F.graminearum, B.sorokinina and P.debaryanum at concentrations below 10 uM. Active against bacterial species P.syringae, B.subtilis and X.campestris. The sequence is that of Antimicrobial peptide 1 from Taraxacum officinale (Common dandelion).